The sequence spans 723 residues: Pescadillo homolog (723 aa).

The BRCT domain occupies 380-497 (EAGSLFATFT…KLLRPDLYAP (118 aa)). 2 disordered regions span residues 440-471 (RPQL…RVPG) and 501-723 (LPPH…LNKK). A coiled-coil region spans residues 522 to 551 (LADQEEEGEAERAAEAEEYENDEQEESGEE). Composition is skewed to acidic residues over residues 537-550 (AEEY…ESGE), 588-600 (MAED…DDGD), and 608-622 (FDQD…EDEE). Composition is skewed to basic and acidic residues over residues 623-634 (EKARSQHQKELE), 670-681 (KKKEEEELERQK), and 700-709 (KKQDAEAEKL). Residues 656–723 (KKQQAPLAKK…RKIEQGLNKK (68 aa)) adopt a coiled-coil conformation. Basic residues predominate over residues 710–723 (RQKRRKIEQGLNKK).

Belongs to the pescadillo family. As to quaternary structure, component of the NOP7 complex, composed of ERB1, NOP7 and YTM1. The complex is held together by ERB1, which interacts with NOP7 via its N-terminal domain and with YTM1 via a high-affinity interaction between the seven-bladed beta-propeller domains of the 2 proteins. The NOP7 complex associates with the 66S pre-ribosome.

Its subcellular location is the nucleus. The protein localises to the nucleolus. It is found in the nucleoplasm. Component of the NOP7 complex, which is required for maturation of the 25S and 5.8S ribosomal RNAs and formation of the 60S ribosome. This chain is Pescadillo homolog, found in Ajellomyces capsulatus (strain NAm1 / WU24) (Darling's disease fungus).